Here is a 351-residue protein sequence, read N- to C-terminus: Methylthioribose-1-phosphate isomerase (351 aa).

Substrate-binding positions include 55 to 57 (RGA), R95, and Q202. D243 acts as the Proton donor in catalysis. 253 to 254 (NK) serves as a coordination point for substrate.

Belongs to the eIF-2B alpha/beta/delta subunits family. MtnA subfamily.

It catalyses the reaction 5-(methylsulfanyl)-alpha-D-ribose 1-phosphate = 5-(methylsulfanyl)-D-ribulose 1-phosphate. The protein operates within amino-acid biosynthesis; L-methionine biosynthesis via salvage pathway; L-methionine from S-methyl-5-thio-alpha-D-ribose 1-phosphate: step 1/6. Functionally, catalyzes the interconversion of methylthioribose-1-phosphate (MTR-1-P) into methylthioribulose-1-phosphate (MTRu-1-P). The polypeptide is Methylthioribose-1-phosphate isomerase (Marinobacter nauticus (strain ATCC 700491 / DSM 11845 / VT8) (Marinobacter aquaeolei)).